The sequence spans 658 residues: Transcription factor E2-alpha (658 aa).

Disordered regions lie at residues 42 to 82 (STQF…GTHY), 140 to 191 (SALS…YPAN), 276 to 313 (NPSVTSSFSSTPAQYGVSSHTPPISTGDTIIGNRGTAT), 331 to 372 (DHSS…SYDG), 460 to 558 (VPAQ…ERRV), and 628 to 658 (EEEKVSGVDPQMGLSGGHPGVGDSHNPVGHM). The Nuclear localization signal signature appears at 173–179 (PKKVRKV). Polar residues predominate over residues 276–303 (NPSVTSSFSSTPAQYGVSSHTPPISTGD). The segment covering 333–344 (SSTNFSSTPSTP) has biased composition (low complexity). The span at 345-355 (VGSPQGITGSG) shows a compositional bias: polar residues. Basic and acidic residues predominate over residues 493 to 507 (PDIKRESKEDEENRS). Over residues 533–544 (QDEDEDEDDDNL) the composition is skewed to acidic residues. A compositionally biased stretch (basic and acidic residues) spans 548–558 (QKAEREKERRV). In terms of domain architecture, bHLH spans 555 to 608 (ERRVANNARERLRVKDINEAFKELGRMCQLHLNSEKPQTKLLILHQAVSVILSL).

As to quaternary structure, homodimer. Heterodimer; efficient DNA binding requires dimerization with another bHLH protein. Interacts with tgfb1i1.

It localises to the nucleus. Transcriptional regulator involved in the initiation of neuronal differentiation and mesenchymal to epithelial transition. Heterodimers between tcf3 and tissue-specific basic helix-loop-helix (bHLH) proteins play major roles in determining tissue-specific cell fate during embryogenesis, like muscle or early B-cell differentiation. Together with tcf15, required for the mesenchymal to epithelial transition. Dimers bind DNA on E-box motifs: 5'-CANNTG-3'. This Xenopus laevis (African clawed frog) protein is Transcription factor E2-alpha (tcf3).